A 29-amino-acid chain; its full sequence is Circulin-F (29 aa).

A cross-link (cyclopeptide (Ala-Arg)) is located at residues 1-29 (AIPCGESCVWIPCISAAIGCSCKNKVCYR). Intrachain disulfides connect cysteine 4/cysteine 20, cysteine 8/cysteine 22, and cysteine 13/cysteine 27.

In terms of processing, this is a cyclic peptide.

Probably participates in a plant defense mechanism. Inhibits the cytopathic effects of the human immunodeficiency virus. The polypeptide is Circulin-F (Chassalia parviflora).